A 274-amino-acid chain; its full sequence is 2,3,4,5-tetrahydropyridine-2,6-dicarboxylate N-succinyltransferase (274 aa).

2 residues coordinate substrate: R104 and D141.

It belongs to the transferase hexapeptide repeat family. Homotrimer.

The protein resides in the cytoplasm. It catalyses the reaction (S)-2,3,4,5-tetrahydrodipicolinate + succinyl-CoA + H2O = (S)-2-succinylamino-6-oxoheptanedioate + CoA. It participates in amino-acid biosynthesis; L-lysine biosynthesis via DAP pathway; LL-2,6-diaminopimelate from (S)-tetrahydrodipicolinate (succinylase route): step 1/3. This is 2,3,4,5-tetrahydropyridine-2,6-dicarboxylate N-succinyltransferase from Shewanella oneidensis (strain ATCC 700550 / JCM 31522 / CIP 106686 / LMG 19005 / NCIMB 14063 / MR-1).